Consider the following 197-residue polypeptide: dTTP/UTP pyrophosphatase (197 aa).

Asp-70 acts as the Proton acceptor in catalysis.

This sequence belongs to the Maf family. YhdE subfamily. A divalent metal cation is required as a cofactor.

The protein localises to the cytoplasm. The enzyme catalyses dTTP + H2O = dTMP + diphosphate + H(+). It catalyses the reaction UTP + H2O = UMP + diphosphate + H(+). In terms of biological role, nucleoside triphosphate pyrophosphatase that hydrolyzes dTTP and UTP. May have a dual role in cell division arrest and in preventing the incorporation of modified nucleotides into cellular nucleic acids. The chain is dTTP/UTP pyrophosphatase (yhdE) from Escherichia coli O157:H7.